We begin with the raw amino-acid sequence, 126 residues long: YGGLGYGGLGGGCGRGFSGGGLPVATASAAPTGLGIASENRYEGTVGVSGNLPFLGTADVAGEFPTAGIGEIDYGCGNGAVGITREGGFGYGAGYGDGYGLGFGGYGGGYGLGYGGYGGCGCSWGY.

The interval 1–17 (YGGLGYGGLGGGCGRGF) is left arm. The tract at residues 18 to 86 (SGGGLPVATA…GNGAVGITRE (69 aa)) is central domain. Residues 87-126 (GGFGYGAGYGDGYGLGFGGYGGGYGLGYGGYGGCGCSWGY) form a right arm (Gly-rich tandem repeats) region.

The protein belongs to the chorion protein family.

Its function is as follows. This protein is one of many from the eggshell of the silk moth. This Bombyx mori (Silk moth) protein is Chorion class B protein M1768.